Reading from the N-terminus, the 1114-residue chain is MADGPRCKRRKQANPRRNNVTNYNNVIEANSDSDDEDKLHIVEEESITDAADCDASVPEDDLPTDHTVLPENSEREGSTNSCWEDEGKETKEILGPEAQSDEVGCTVKEDECDSDAENEQNHDPNVEEFLQQEDTAVIYPEAPEEDQRQGTPEASGQDENGTPDAFSQLLTCPYCDRGYKRFTSLKEHIKYRHEKNEDNFSCSLCSYTFAYRTQLDRHMTSHKSGRDQRHVTQSSGNRKFKCTECGKAFKYKHHLKEHLRIHSGEKPYECPNCKKRFSHSGSYSSHISSKKCIGLMPVKGRARSGLKTSQCSSPSLSASPGSPARPQIRQKIENKPLQEQLPVNQIKTEPVDYEFKPIVVASGINCSTPLQNGVFSGGSPLQATSSPQGVVQAVVLPTVGLVSPISINLSDIQNVLKVAVDGNVIRQVLENNHANLASKEQETISNASIQQAGHSLISAISLPLVDQDGTTKIIINYSLEQPSQLQVVPQNLKKEHSVPTNSCKNEKLPEDLTVKSEKDKNFEGETNDSTCLLCDDCPGDLNALQELKHYETKNPPQLPQSSGTEAEKPSSPAPSETGENNLSPGQPPLKNLLSLLKAYYALNAQPSAEELSKIADSVNLPLDVVKKWFEKMQAGQISVQSSGPSSPEQVKISSPTDNDDQAATTNESEPQNSTNNSQNPANTSKSQTSSGGSTQNGSRSSTPSPSPLNLSSSRNSQGYTYTAEGVQEEPQMEPLDLSLPKQHGELLERSTITSVYQNSVYSVQEEPLNLTCAKKEPQKDNSITDSDPIVNVIPPSANPINIAIPTVTAQLPTIVAIADQNSVPCLRALAANKQTILIPQVAYTYSTTVSPAVQETPPKQTQANGSQDERQDTSSEGVSNVEDQNDSDSTPPKKKMRKTENGMYACDLCDKIFQKSSSLLRHKYEHTGKRPHECGICKKAFKHKHHLIEHMRLHSGEKPYQCDKCGKRFSHSGSYSQHMNHRYSYCKREAEERDSTEQEEVGQEVLSSEHAGARASPSQIDSDERESLTREEEEDSEKEEEEEEEKDVEGLQEEKECRKLQDVEEEEEVEEEEEEEEGKTEGNKNDDVVNRASNAEPEVIQSNGQVSEEKTNKA.

Disordered regions lie at residues 1 to 105 (MADG…EVGC) and 142 to 163 (APEE…NGTP). Low complexity predominate over residues 15–30 (PRRNNVTNYNNVIEAN). Polar residues predominate over residues 149 to 160 (QGTPEASGQDEN). 3 C2H2-type zinc fingers span residues 170 to 193 (LTCP…KYRH), 200 to 222 (FSCS…MTSH), and 240 to 262 (FKCT…LRIH). Residues 268–292 (YECPNCKKRFSHSGSYSSHISSKKC) form a C2H2-type 4; atypical zinc finger. Disordered stretches follow at residues 304–326 (SGLK…PARP), 491–529 (NLKK…TNDS), 553–588 (KNPP…GQPP), and 636–716 (QISV…SRNS). Over residues 309 to 326 (SQCSSPSLSASPGSPARP) the composition is skewed to low complexity. The segment covering 504 to 523 (KNEKLPEDLTVKSEKDKNFE) has biased composition (basic and acidic residues). 2 stretches are compositionally biased toward polar residues: residues 573–584 (APSETGENNLSP) and 636–681 (QISV…QNPA). The segment at residues 581–640 (NLSPGQPPLKNLLSLLKAYYALNAQPSAEELSKIADSVNLPLDVVKKWFEKMQAGQISVQ) is a DNA-binding region (homeobox; atypical). Residues 682 to 716 (NTSKSQTSSGGSTQNGSRSSTPSPSPLNLSSSRNS) show a composition bias toward low complexity. The CTBP-binding motif signature appears at 767–771 (PLNLT). 2 stretches are compositionally biased toward polar residues: residues 852–866 (AVQE…ANGS) and 874–890 (SSEG…SDST). The segment at 852–898 (AVQETPPKQTQANGSQDERQDTSSEGVSNVEDQNDSDSTPPKKKMRK) is disordered. 2 C2H2-type zinc fingers span residues 904–926 (YACD…KYEH) and 932–954 (HECG…MRLH). Residues 960–981 (YQCDKCGKRFSHSGSYSQHMNH) form a C2H2-type 7; atypical zinc finger. The disordered stretch occupies residues 989-1114 (EAEERDSTEQ…QVSEEKTNKA (126 aa)). Residues 1031–1047 (EEEEDSEKEEEEEEEKD) show a composition bias toward acidic residues. A compositionally biased stretch (basic and acidic residues) spans 1048 to 1062 (VEGLQEEKECRKLQD). The segment covering 1063-1078 (VEEEEEVEEEEEEEEG) has biased composition (acidic residues). A compositionally biased stretch (basic and acidic residues) spans 1079–1089 (KTEGNKNDDVV).

It belongs to the delta-EF1/ZFH-1 C2H2-type zinc-finger family. Expression is developmentally regulated with high expression in mesoderm, nervous system and lens.

It is found in the nucleus. Functionally, acts as a transcriptional repressor. Positively regulates neuronal differentiation. Represses transcription by binding to the E box-containing promoter. Binds to delta 1-crystallin enhancer core and represses lens-specific transcription. It also binds many other non-lens specific DNA sequences. This Gallus gallus (Chicken) protein is Zinc finger E-box-binding homeobox 1 (ZEB1).